The chain runs to 360 residues: Magnesium-protoporphyrin IX monomethyl ester [oxidative] cyclase (360 aa).

A disordered region spans residues Met-1–Asp-21.

The protein belongs to the AcsF family. Fe cation is required as a cofactor.

The catalysed reaction is Mg-protoporphyrin IX 13-monomethyl ester + 3 NADPH + 3 O2 + 2 H(+) = 3,8-divinyl protochlorophyllide a + 3 NADP(+) + 5 H2O. It functions in the pathway porphyrin-containing compound metabolism; chlorophyll biosynthesis (light-independent). In terms of biological role, catalyzes the formation of the isocyclic ring in chlorophyll biosynthesis. Mediates the cyclase reaction, which results in the formation of divinylprotochlorophyllide (Pchlide) characteristic of all chlorophylls from magnesium-protoporphyrin IX 13-monomethyl ester (MgPMME). The chain is Magnesium-protoporphyrin IX monomethyl ester [oxidative] cyclase from Synechococcus sp. (strain CC9311).